Here is a 452-residue protein sequence, read N- to C-terminus: Zinc finger protein 277 (452 aa).

The C2H2-type 1 zinc finger occupies 200–224 (LMCLYCEKIFRDRPTLKEHMRKKGH). Positions 248 to 271 (APTPRKQHLQKRRRETASVSTVAD) are disordered. Residues 252–261 (RKQHLQKRRR) are compositionally biased toward basic residues. A C2H2-type 2 zinc finger spans residues 361-385 (LRCVTCDLQFDEEELLVEHMAQESH).

Belongs to the ZNF277 family. In terms of assembly, interacts with components of the origin recognition complex (ORC) complex, Orc2 and Orc3, components of the SAGA transcription coactivator-HAT complex, Gcn5 and e(y)2, components of the mRNP biogenesis THO complex, thoc5 and e(y)2, and a component of the TFIID complex, TBP. Also interacts with polybromo, a component of the chromatin remodeling SWI/SNF complex.

It is found in the nucleus. The protein resides in the cytoplasm. Functionally, DNA binding protein which is involved in the positive regulation of both basal and inducible transcription. Mainly localizes to active promoter sites and interacts with components of various transcription and replication regulatory complexes, such as the ORC, SAGA, THO, TFIID and SWI/SNF complexes. It may therefore regulate transcription by promoting the association of these complexes to their binding sites. This Drosophila melanogaster (Fruit fly) protein is Zinc finger protein 277.